A 392-amino-acid polypeptide reads, in one-letter code: 8-amino-7-oxononanoate synthase (392 aa).

Glycine 108 to phenylalanine 109 lines the pyridoxal 5'-phosphate pocket. A substrate-binding site is contributed by histidine 133. Pyridoxal 5'-phosphate is bound by residues serine 180, aspartate 205–histidine 208, and threonine 236–lysine 239. N6-(pyridoxal phosphate)lysine is present on lysine 239. Threonine 353 is a substrate binding site.

The protein belongs to the class-II pyridoxal-phosphate-dependent aminotransferase family. BioF subfamily. In terms of assembly, homodimer. Pyridoxal 5'-phosphate is required as a cofactor.

It carries out the reaction 6-carboxyhexanoyl-[ACP] + L-alanine + H(+) = (8S)-8-amino-7-oxononanoate + holo-[ACP] + CO2. It functions in the pathway cofactor biosynthesis; biotin biosynthesis. Its function is as follows. Catalyzes the decarboxylative condensation of pimeloyl-[acyl-carrier protein] and L-alanine to produce 8-amino-7-oxononanoate (AON), [acyl-carrier protein], and carbon dioxide. The chain is 8-amino-7-oxononanoate synthase from Bacillus pumilus (strain SAFR-032).